The sequence spans 137 residues: Large ribosomal subunit protein uL16 (137 aa).

The protein belongs to the universal ribosomal protein uL16 family. In terms of assembly, part of the 50S ribosomal subunit.

Binds 23S rRNA and is also seen to make contacts with the A and possibly P site tRNAs. This is Large ribosomal subunit protein uL16 from Leuconostoc citreum (strain KM20).